We begin with the raw amino-acid sequence, 366 residues long: Chorismate synthase (366 aa).

NADP(+) is bound by residues R48 and R54. FMN is bound by residues R125 to S127, N237 to A238, G277, K292 to S296, and R318.

The protein belongs to the chorismate synthase family. As to quaternary structure, homotetramer. It depends on FMNH2 as a cofactor.

It catalyses the reaction 5-O-(1-carboxyvinyl)-3-phosphoshikimate = chorismate + phosphate. The protein operates within metabolic intermediate biosynthesis; chorismate biosynthesis; chorismate from D-erythrose 4-phosphate and phosphoenolpyruvate: step 7/7. Its function is as follows. Catalyzes the anti-1,4-elimination of the C-3 phosphate and the C-6 proR hydrogen from 5-enolpyruvylshikimate-3-phosphate (EPSP) to yield chorismate, which is the branch point compound that serves as the starting substrate for the three terminal pathways of aromatic amino acid biosynthesis. This reaction introduces a second double bond into the aromatic ring system. This is Chorismate synthase from Acidovorax ebreus (strain TPSY) (Diaphorobacter sp. (strain TPSY)).